Consider the following 362-residue polypeptide: Dihydroorotate dehydrogenase (quinone) (362 aa).

FMN is bound by residues 62–66 (AGYDK) and Thr86. Lys66 is a substrate binding site. Substrate is bound at residue 111 to 115 (NRLGF). Positions 139 and 170 each coordinate FMN. Position 170 (Asn170) interacts with substrate. Catalysis depends on Ser173, which acts as the Nucleophile. Residue Asn175 participates in substrate binding. Residues Lys215 and Ser243 each coordinate FMN. Position 244 to 245 (244 to 245 (NT)) interacts with substrate. FMN-binding positions include Gly266, Gly295, and 316-317 (YS).

This sequence belongs to the dihydroorotate dehydrogenase family. Type 2 subfamily. As to quaternary structure, monomer. FMN serves as cofactor.

Its subcellular location is the cell membrane. The catalysed reaction is (S)-dihydroorotate + a quinone = orotate + a quinol. Its pathway is pyrimidine metabolism; UMP biosynthesis via de novo pathway; orotate from (S)-dihydroorotate (quinone route): step 1/1. Its function is as follows. Catalyzes the conversion of dihydroorotate to orotate with quinone as electron acceptor. The protein is Dihydroorotate dehydrogenase (quinone) of Sinorhizobium medicae (strain WSM419) (Ensifer medicae).